A 293-amino-acid polypeptide reads, in one-letter code: GPN-loop GTPase 3 (293 aa).

GTP is bound at residue 13–18; that stretch reads GAGKST. The short motif at 70 to 72 is the Gly-Pro-Asn (GPN)-loop; involved in dimer interface element; that stretch reads GPN. 176–179 is a GTP binding site; the sequence is SKMD. The span at 272-281 shows a compositional bias: basic and acidic residues; that stretch reads HEAQEPREPN. The interval 272 to 293 is disordered; that stretch reads HEAQEPREPNDEQDVDYEDADI. Over residues 282 to 293 the composition is skewed to acidic residues; it reads DEQDVDYEDADI.

Belongs to the GPN-loop GTPase family. As to quaternary structure, heterodimers with gpn1 or gpn2. Binds to RNA polymerase II (RNAPII).

Small GTPase required for proper nuclear import of RNA polymerase II and III (RNAPII and RNAPIII). May act at an RNAP assembly step prior to nuclear import. The polypeptide is GPN-loop GTPase 3 (Aspergillus fumigatus (strain ATCC MYA-4609 / CBS 101355 / FGSC A1100 / Af293) (Neosartorya fumigata)).